Reading from the N-terminus, the 655-residue chain is Serine/threonine-protein kinase SKM1 (655 aa).

Residues Gly3–Pro118 form the PH domain. Residues Val123 to Gly136 enclose the CRIB domain. Composition is skewed to basic and acidic residues over residues Glu265–Thr276 and Lys318–His327. Residues Glu265–His327 are disordered. Positions Phe360–Leu639 constitute a Protein kinase domain. Residues Ala366–Val374 and Lys406 each bind ATP. Residue Asp507 is the Proton acceptor of the active site.

The protein belongs to the protein kinase superfamily. STE Ser/Thr protein kinase family. STE20 subfamily.

It carries out the reaction L-seryl-[protein] + ATP = O-phospho-L-seryl-[protein] + ADP + H(+). The enzyme catalyses L-threonyl-[protein] + ATP = O-phospho-L-threonyl-[protein] + ADP + H(+). Functionally, may be involved in cellular signaling or cytoskeletal functions. May play a role in morphogenetic control. The sequence is that of Serine/threonine-protein kinase SKM1 (SKM1) from Saccharomyces cerevisiae (strain ATCC 204508 / S288c) (Baker's yeast).